The sequence spans 310 residues: p-hydroxybenzoic acid efflux pump subunit AaeA (310 aa).

A helical membrane pass occupies residues 12 to 32 (AITLVLVILAFIAIFRAWVYY).

The protein belongs to the membrane fusion protein (MFP) (TC 8.A.1) family.

The protein localises to the cell inner membrane. Functionally, forms an efflux pump with AaeB. The polypeptide is p-hydroxybenzoic acid efflux pump subunit AaeA (Escherichia fergusonii (strain ATCC 35469 / DSM 13698 / CCUG 18766 / IAM 14443 / JCM 21226 / LMG 7866 / NBRC 102419 / NCTC 12128 / CDC 0568-73)).